The sequence spans 293 residues: N-acetylneuraminate lyase (293 aa).

Aceneuramate contacts are provided by serine 48 and serine 49. Catalysis depends on tyrosine 137, which acts as the Proton donor. Lysine 165 serves as the catalytic Schiff-base intermediate with substrate. Positions 167, 189, 191, 192, and 208 each coordinate aceneuramate.

This sequence belongs to the DapA family. NanA subfamily. Homotetramer.

It localises to the cytoplasm. The enzyme catalyses aceneuramate = aldehydo-N-acetyl-D-mannosamine + pyruvate. It participates in amino-sugar metabolism; N-acetylneuraminate degradation; D-fructose 6-phosphate from N-acetylneuraminate: step 1/5. In terms of biological role, catalyzes the reversible aldol cleavage of N-acetylneuraminic acid (sialic acid; Neu5Ac) to form pyruvate and N-acetylmannosamine (ManNAc) via a Schiff base intermediate. This chain is N-acetylneuraminate lyase, found in Staphylococcus aureus (strain MRSA252).